A 608-amino-acid polypeptide reads, in one-letter code: Dihydroxyacetone kinase (608 aa).

The DhaK domain occupies 8-357 (YKKDLVLSHL…LDHKTSAPGW (350 aa)). Residues 53 to 56 (GSGH), Lys-105, and Asp-110 each bind substrate. Catalysis depends on His-234, which acts as the Tele-hemiaminal-histidine intermediate. Residues 392–599 (KLYADLLESG…LAALISGITD (208 aa)) form the DhaL domain. Residues 421–424 (DGDC), 467–468 (TS), 523–524 (TL), and 584–586 (DPG) each bind ATP.

Belongs to the dihydroxyacetone kinase (DAK) family.

Its subcellular location is the cytoplasm. It carries out the reaction dihydroxyacetone + ATP = dihydroxyacetone phosphate + ADP + H(+). It catalyses the reaction D-glyceraldehyde + ATP = D-glyceraldehyde 3-phosphate + ADP + H(+). It functions in the pathway polyol metabolism; glycerol fermentation; glycerone phosphate from glycerol (oxidative route): step 2/2. Functionally, catalyzes both the phosphorylation of dihydroxyacetone and of glyceraldehyde. This is Dihydroxyacetone kinase (DAK) from Komagataella pastoris (Yeast).